Consider the following 165-residue polypeptide: Cysteine and tyrosine-rich protein 1 (165 aa).

An N-terminal signal peptide occupies residues 1–29 (MDALRLPRRLGVLLWKVVLLFVYAEDCRA). Topologically, residues 30-61 (QCGKDCRAYCCNGSTPHCCSYYAYIGSILSGT) are extracellular. A helical transmembrane segment spans residues 62 to 82 (AIAGIVFGIVFIMGVIAGIAI). Residues 83-165 (CICMCMKNNR…SSSQNRICNN (83 aa)) are Cytoplasmic-facing. Residues 127–165 (DLPPPYSPAPQASAQRSPPPPYPGNSRKYSSSQNRICNN) form a disordered region. Residues 153-165 (RKYSSSQNRICNN) are compositionally biased toward polar residues.

It belongs to the CYYR1 family.

Its subcellular location is the membrane. The chain is Cysteine and tyrosine-rich protein 1 (Cyyr1) from Rattus norvegicus (Rat).